We begin with the raw amino-acid sequence, 282 residues long: WRKY transcription factor 71 (282 aa).

The interval 63-121 (LTSNSPVVSSSSNEGEPKENTNDKSDQMEDNEGDLHGVGESSKQLTKQGKKKGEKKERE) is disordered. The segment covering 65–75 (SNSPVVSSSSN) has biased composition (low complexity). The span at 77–99 (GEPKENTNDKSDQMEDNEGDLHG) shows a compositional bias: basic and acidic residues. The WRKY DNA-binding region spans 130–195 (SEIDHLEDGY…YEGKHNHPIP (66 aa)).

This sequence belongs to the WRKY group II-c family.

It localises to the nucleus. Its function is as follows. Transcription factor. Interacts specifically with the W box (5'-(T)TGAC[CT]-3'), a frequently occurring elicitor-responsive cis-acting element. This is WRKY transcription factor 71 (WRKY71) from Arabidopsis thaliana (Mouse-ear cress).